The primary structure comprises 452 residues: Bifunctional purine biosynthesis protein PurH (452 aa).

Positions 1 to 115 (MKRILVSLYE…KNWKKVKPAF (115 aa)) constitute an MGS-like domain.

It belongs to the PurH family.

The enzyme catalyses (6R)-10-formyltetrahydrofolate + 5-amino-1-(5-phospho-beta-D-ribosyl)imidazole-4-carboxamide = 5-formamido-1-(5-phospho-D-ribosyl)imidazole-4-carboxamide + (6S)-5,6,7,8-tetrahydrofolate. It catalyses the reaction IMP + H2O = 5-formamido-1-(5-phospho-D-ribosyl)imidazole-4-carboxamide. Its pathway is purine metabolism; IMP biosynthesis via de novo pathway; 5-formamido-1-(5-phospho-D-ribosyl)imidazole-4-carboxamide from 5-amino-1-(5-phospho-D-ribosyl)imidazole-4-carboxamide (10-formyl THF route): step 1/1. The protein operates within purine metabolism; IMP biosynthesis via de novo pathway; IMP from 5-formamido-1-(5-phospho-D-ribosyl)imidazole-4-carboxamide: step 1/1. The sequence is that of Bifunctional purine biosynthesis protein PurH from Thermotoga maritima (strain ATCC 43589 / DSM 3109 / JCM 10099 / NBRC 100826 / MSB8).